A 781-amino-acid polypeptide reads, in one-letter code: ATP-dependent 6-phosphofructokinase (781 aa).

Residues 1–394 are N-terminal catalytic PFK domain 1; that stretch reads MATWMEGKYV…NLATYIKLSK (394 aa). ATP-binding positions include G27, 90–91, and 120–123; these read RC and GDGS. Residue D121 participates in Mg(2+) binding. Residues 166–168, R203, 210–212, E266, R294, and 300–303 contribute to the substrate site; these read SID, MGR, and HVQR. The Proton acceptor role is filled by D168. The interval 395-409 is interdomain linker; the sequence is IEQPRQSVMSSENNL. A C-terminal regulatory PFK domain 2 region spans residues 410–781; that stretch reads RIGIVNVGAP…ESIMAGTDRK (372 aa). Residues R479, 537-541, R575, 582-584, D638, R664, 670-673, and R745 contribute to the beta-D-fructose 2,6-bisphosphate site; these read TISNN, MGG, and HMQQ.

The protein belongs to the phosphofructokinase type A (PFKA) family. ATP-dependent PFK group I subfamily. Eukaryotic two domain clade 'E' sub-subfamily. As to quaternary structure, homotetramer. Mg(2+) is required as a cofactor.

It localises to the cytoplasm. The enzyme catalyses beta-D-fructose 6-phosphate + ATP = beta-D-fructose 1,6-bisphosphate + ADP + H(+). The protein operates within carbohydrate degradation; glycolysis; D-glyceraldehyde 3-phosphate and glycerone phosphate from D-glucose: step 3/4. Allosterically activated by ADP, AMP, or fructose 2,6-bisphosphate, and allosterically inhibited by ATP or citrate. Functionally, catalyzes the phosphorylation of D-fructose 6-phosphate to fructose 1,6-bisphosphate by ATP, the first committing step of glycolysis. The sequence is that of ATP-dependent 6-phosphofructokinase (PFK) from Schistosoma mansoni (Blood fluke).